The chain runs to 391 residues: Terminal nucleotidyltransferase 5C (391 aa).

This sequence belongs to the TENT family. In terms of assembly, interacts with BCCIP and PABPC1; the interaction has no effect on TENT5C poly(A) polymerase function. Interacts with PLK4; this interaction leads to the TENT5C recruitment into the centrosome.

The protein resides in the nucleus. The protein localises to the cytoplasm. It localises to the cytoskeleton. It is found in the microtubule organizing center. Its subcellular location is the centrosome. It carries out the reaction RNA(n) + ATP = RNA(n)-3'-adenine ribonucleotide + diphosphate. Catalyzes the transfer of one adenosine molecule from an ATP to an mRNA poly(A) tail bearing a 3'-OH terminal group and enhances mRNA stability and gene expression. Can also elongate RNA oligos ending with uridine molecule, provided that the sequence is adenosine-rich. Mainly targets mRNAs encoding endoplasmic reticulum-targeted protein. In terms of biological role, (Microbial infection) Seems to enhance replication of some viruses, including yellow fever virus, in response to type I interferon. This chain is Terminal nucleotidyltransferase 5C, found in Homo sapiens (Human).